The sequence spans 359 residues: Centromere-binding protein 1 (359 aa).

The tract at residues 1-262 (MSGKRSYQDD…SHKEVERRRR (262 aa)) is disordered. Positions 55-78 (KENKENRDGDKVGDDEHDVVKGES) are enriched in basic and acidic residues. The span at 120–161 (GDEDEDEDEEEEEDEDDHVDIDDVDKDPDAVIDEDDDEEDED) shows a compositional bias: acidic residues. Residues 249 to 259 (QRKESHKEVER) are compositionally biased toward basic and acidic residues. The 49-residue stretch at 249-297 (QRKESHKEVERRRRQNINTAIEKLSDLLPVKETSKAAILSRAAEYIQKM) folds into the bHLH domain.

As to quaternary structure, binds DNA as a dimer.

The protein resides in the nucleus. Its subcellular location is the chromosome. It is found in the centromere. Its function is as follows. Required for chromosome stability and methionine prototrophy. It is involved in chromosomal segregation. Binds to a highly conserved DNA sequence (5'-RTCACRTG-3'), called CDEI, found in centromeres and in several promoters. In Kluyveromyces lactis (strain ATCC 8585 / CBS 2359 / DSM 70799 / NBRC 1267 / NRRL Y-1140 / WM37) (Yeast), this protein is Centromere-binding protein 1 (CBF1).